The sequence spans 633 residues: Glutamyl-tRNA(Gln) amidotransferase subunit E (633 aa).

The segment at 415 to 437 is disordered; sequence LDDGTTKFLRPQPGSARMYPETD.

The protein belongs to the GatB/GatE family. GatE subfamily. Heterodimer of GatD and GatE.

It carries out the reaction L-glutamyl-tRNA(Gln) + L-glutamine + ATP + H2O = L-glutaminyl-tRNA(Gln) + L-glutamate + ADP + phosphate + H(+). Allows the formation of correctly charged Gln-tRNA(Gln) through the transamidation of misacylated Glu-tRNA(Gln) in organisms which lack glutaminyl-tRNA synthetase. The reaction takes place in the presence of glutamine and ATP through an activated gamma-phospho-Glu-tRNA(Gln). The GatDE system is specific for glutamate and does not act on aspartate. This chain is Glutamyl-tRNA(Gln) amidotransferase subunit E, found in Saccharolobus solfataricus (strain ATCC 35092 / DSM 1617 / JCM 11322 / P2) (Sulfolobus solfataricus).